The following is a 237-amino-acid chain: MKKQNIPEEILSLITEEEINLFQELQIKIKELNNKTNLTRLTDGDDYWVSQVFDSIWPFKAFTNINFDNKKFLDIGSGCGFPGLAYAITHPNSEIYLIDSLKKKTDAIKFLVKQINFKNNIHVINDRVENLAHQSSMRNNFNIATTRAVSNPSTVSEYILPMLKKEGFGVLYCGKWTNEESKNLDKTLEILEGKVKDKKEIQLPRNKGTRNIILIQPKNFCPEIYPRKVGKPEKNPL.

S-adenosyl-L-methionine-binding positions include glycine 76, phenylalanine 81, 128–129 (VE), and arginine 147.

Belongs to the methyltransferase superfamily. RNA methyltransferase RsmG family.

It localises to the cytoplasm. Functionally, specifically methylates the N7 position of a guanine in 16S rRNA. The chain is Ribosomal RNA small subunit methyltransferase G from Prochlorococcus marinus (strain MIT 9215).